The following is a 686-amino-acid chain: Chondroitin proteoglycan 1 (686 aa).

The signal sequence occupies residues 1–18 (MLPKSVLIVAFLVASSSA). Asn46 carries N-linked (GlcNAc...) asparagine glycosylation. Positions 63-120 (DTDCSTKEDGLYAIGGCSPQFLTCSGGIARIMDCPANLIYDQRIIACEYSYNVPECSG) constitute a Chitin-binding type-2 1 domain. Cys96 and Cys109 are disulfide-bonded. Residue Asn143 is glycosylated (N-linked (GlcNAc...) asparagine). The 58-residue stretch at 228-285 (DKTCNGKADGFYSFGQCSDHYIACSNGYTIPMQCPARLSFDEARVICDYTMNVPECQN) folds into the Chitin-binding type-2 2 domain. Cys261 and Cys274 form a disulfide bridge. Positions 284 to 312 (QNGSGNYEGSAEETTTEASGELPYSNGYG) are disordered. N-linked (GlcNAc...) asparagine glycosylation is found at Asn285, Asn635, and Asn664. The tract at residues 658 to 686 (KLRSATNRTSTKEATTRTQNMHAHYHRNH) is disordered.

Functionally, required for polar body extrusion during cytokinesis in embryo development. Affects cortical granule size. Shown to have roles in meiotic chromosome segregation, osmotic barrier function and polarization in conjunction with cpg-2. Binds chitin. The chain is Chondroitin proteoglycan 1 (cpg-1) from Caenorhabditis briggsae.